The sequence spans 153 residues: 6,7-dimethyl-8-ribityllumazine synthase (153 aa).

Residues Phe22, 56 to 58 (AFE), and 80 to 82 (AVI) contribute to the 5-amino-6-(D-ribitylamino)uracil site. 85-86 (ST) contributes to the (2S)-2-hydroxy-3-oxobutyl phosphate binding site. His88 serves as the catalytic Proton donor. Phe113 contributes to the 5-amino-6-(D-ribitylamino)uracil binding site. (2S)-2-hydroxy-3-oxobutyl phosphate is bound at residue Arg127.

Belongs to the DMRL synthase family.

The enzyme catalyses (2S)-2-hydroxy-3-oxobutyl phosphate + 5-amino-6-(D-ribitylamino)uracil = 6,7-dimethyl-8-(1-D-ribityl)lumazine + phosphate + 2 H2O + H(+). Its pathway is cofactor biosynthesis; riboflavin biosynthesis; riboflavin from 2-hydroxy-3-oxobutyl phosphate and 5-amino-6-(D-ribitylamino)uracil: step 1/2. Its function is as follows. Catalyzes the formation of 6,7-dimethyl-8-ribityllumazine by condensation of 5-amino-6-(D-ribitylamino)uracil with 3,4-dihydroxy-2-butanone 4-phosphate. This is the penultimate step in the biosynthesis of riboflavin. This Clostridium novyi (strain NT) protein is 6,7-dimethyl-8-ribityllumazine synthase.